Consider the following 445-residue polypeptide: Tubulin beta-1 chain (445 aa).

GTP contacts are provided by Gln11, Glu69, Ser138, Gly142, Thr143, Gly144, Asn204, and Asn226. Glu69 is a binding site for Mg(2+). The tract at residues 426-445 (QDATAEDEEEYEDEEEEMAA) is disordered. The span at 429–445 (TAEDEEEYEDEEEEMAA) shows a compositional bias: acidic residues.

Belongs to the tubulin family. Dimer of alpha and beta chains. A typical microtubule is a hollow water-filled tube with an outer diameter of 25 nm and an inner diameter of 15 nM. Alpha-beta heterodimers associate head-to-tail to form protofilaments running lengthwise along the microtubule wall with the beta-tubulin subunit facing the microtubule plus end conferring a structural polarity. Microtubules usually have 13 protofilaments but different protofilament numbers can be found in some organisms and specialized cells. The cofactor is Mg(2+).

The protein resides in the cytoplasm. It is found in the cytoskeleton. Functionally, tubulin is the major constituent of microtubules, a cylinder consisting of laterally associated linear protofilaments composed of alpha- and beta-tubulin heterodimers. Microtubules grow by the addition of GTP-tubulin dimers to the microtubule end, where a stabilizing cap forms. Below the cap, tubulin dimers are in GDP-bound state, owing to GTPase activity of alpha-tubulin. This is Tubulin beta-1 chain (TUBB1) from Eleusine indica (Goosegrass).